Reading from the N-terminus, the 86-residue chain is BaSO(4)-adsorbing protein 1 (86 aa).

Cystine bridges form between Cys-6–Cys-22, Cys-18–Cys-49, and Cys-39–Cys-54. The segment at 58-86 (GDSASNTQNQGGSRRQENEDQGDDEWDRK) is disordered. The segment covering 59–70 (DSASNTQNQGGS) has biased composition (polar residues). The span at 76 to 86 (EDQGDDEWDRK) shows a compositional bias: acidic residues.

Salivary gland (at protein level).

The protein localises to the secreted. Functionally, inhibits lectin and classical pathways of complement system activation in the host with no significant effect on the alternative pathway. Inhibits host extrinsic blood coagulation pathway but not the intrinsic cascade. Binds to neutral and negatively charged membranes in vitro; binding is reduced upon pre-incubation with Ca(2+). This is BaSO(4)-adsorbing protein 1 from Ornithodoros savignyi (African eyed tampan).